The primary structure comprises 431 residues: Glutamate--tRNA ligase 1 (431 aa).

Residues 6-16 (PSPTGDMHIGN) carry the 'HIGH' region motif. Residues 235 to 239 (KMSKR) carry the 'KMSKS' region motif. ATP is bound at residue lysine 238.

It belongs to the class-I aminoacyl-tRNA synthetase family. Glutamate--tRNA ligase type 1 subfamily. In terms of assembly, monomer.

It is found in the cytoplasm. It carries out the reaction tRNA(Glu) + L-glutamate + ATP = L-glutamyl-tRNA(Glu) + AMP + diphosphate. Catalyzes the attachment of glutamate to tRNA(Glu) in a two-step reaction: glutamate is first activated by ATP to form Glu-AMP and then transferred to the acceptor end of tRNA(Glu). The protein is Glutamate--tRNA ligase 1 of Campylobacter jejuni subsp. jejuni serotype O:6 (strain 81116 / NCTC 11828).